We begin with the raw amino-acid sequence, 308 residues long: Isoaspartyl peptidase/L-asparaginase (308 aa).

M1 carries the post-translational modification N-acetylmethionine. Residue T168 is the Nucleophile of the active site. Substrate contacts are provided by residues 196–199 (RVGD) and 219–222 (TGHG).

It belongs to the Ntn-hydrolase family. Heterodimer of an alpha and beta chain produced by autocleavage. This heterodimer may then dimerize in turn, giving rise to a heterotetramer. Cleaved into an alpha and beta chain by autocatalysis; this activates the enzyme. The N-terminal residue of the beta subunit is responsible for the nucleophile hydrolase activity. Expressed in brain, kidney, testis and tissues of the gastrointestinal tract. Present in sperm (at protein level). Over-expressed in uterine, mammary, prostatic and ovarian carcinoma.

Its subcellular location is the cytoplasm. The enzyme catalyses L-asparagine + H2O = L-aspartate + NH4(+). The catalysed reaction is Cleavage of a beta-linked Asp residue from the N-terminus of a polypeptide.. Its activity is regulated as follows. Glycine accelerates autocleavage into an alpha and beta chain. Functionally, has both L-asparaginase and beta-aspartyl peptidase activity. May be involved in the production of L-aspartate, which can act as an excitatory neurotransmitter in some brain regions. Is highly active with L-Asp beta-methyl ester. Besides, has catalytic activity toward beta-aspartyl dipeptides and their methyl esters, including beta-L-Asp-L-Phe, beta-L-Asp-L-Phe methyl ester (aspartame), beta-L-Asp-L-Ala, beta-L-Asp-L-Leu and beta-L-Asp-L-Lys. Does not have aspartylglucosaminidase activity and is inactive toward GlcNAc-L-Asn. Likewise, has no activity toward glutamine. The polypeptide is Isoaspartyl peptidase/L-asparaginase (ASRGL1) (Homo sapiens (Human)).